Here is a 1405-residue protein sequence, read N- to C-terminus: DNA-directed RNA polymerase subunit beta' (1405 aa).

Zn(2+) contacts are provided by cysteine 70, cysteine 72, cysteine 85, and cysteine 88. Positions 460, 462, and 464 each coordinate Mg(2+). The Zn(2+) site is built by cysteine 815, cysteine 890, cysteine 897, and cysteine 900. Residues 1375–1405 (GLTDSEMETLSGKPAGAEPVAALADAGADEE) are disordered.

The protein belongs to the RNA polymerase beta' chain family. In terms of assembly, the RNAP catalytic core consists of 2 alpha, 1 beta, 1 beta' and 1 omega subunit. When a sigma factor is associated with the core the holoenzyme is formed, which can initiate transcription. The cofactor is Mg(2+). Zn(2+) serves as cofactor.

It carries out the reaction RNA(n) + a ribonucleoside 5'-triphosphate = RNA(n+1) + diphosphate. In terms of biological role, DNA-dependent RNA polymerase catalyzes the transcription of DNA into RNA using the four ribonucleoside triphosphates as substrates. The sequence is that of DNA-directed RNA polymerase subunit beta' from Xanthomonas oryzae pv. oryzae (strain MAFF 311018).